The primary structure comprises 118 residues: UPF0295 protein GWCH70_0499 (118 aa).

The next 2 membrane-spanning stretches (helical) occupy residues 12-32 (IRTFALSLIFVGFIVMYIGIF) and 42-62 (LFMILGLLFIIASTVVYFWIG).

Belongs to the UPF0295 family.

The protein localises to the cell membrane. This chain is UPF0295 protein GWCH70_0499, found in Geobacillus sp. (strain WCH70).